The chain runs to 66 residues: Disk-determining factor A (66 aa).

Involved in cell-shape determination. Required for the formation of disks. In Haloferax volcanii (strain ATCC 29605 / DSM 3757 / JCM 8879 / NBRC 14742 / NCIMB 2012 / VKM B-1768 / DS2) (Halobacterium volcanii), this protein is Disk-determining factor A.